We begin with the raw amino-acid sequence, 820 residues long: TORTIFOLIA1-like protein 2 (820 aa).

5 HEAT repeats span residues Asp61–Gly98, Pro102–Cys139, Gly146–Glu183, Ala187–Ala224, and Ser228–Lys265. Positions Pro304–Ser321 are enriched in low complexity. Disordered stretches follow at residues Pro304–Ala325, Pro357–Asp377, and Gly584–Gly644. Residues Tyr367–Asp377 show a composition bias toward basic and acidic residues. The segment covering Gly584–Lys613 has biased composition (polar residues).

In Arabidopsis thaliana (Mouse-ear cress), this protein is TORTIFOLIA1-like protein 2.